The sequence spans 168 residues: Large ribosomal subunit protein uL10 (168 aa).

Belongs to the universal ribosomal protein uL10 family. As to quaternary structure, part of the ribosomal stalk of the 50S ribosomal subunit. The N-terminus interacts with L11 and the large rRNA to form the base of the stalk. The C-terminus forms an elongated spine to which L12 dimers bind in a sequential fashion forming a multimeric L10(L12)X complex.

Functionally, forms part of the ribosomal stalk, playing a central role in the interaction of the ribosome with GTP-bound translation factors. In Acidovorax ebreus (strain TPSY) (Diaphorobacter sp. (strain TPSY)), this protein is Large ribosomal subunit protein uL10.